Here is a 238-residue protein sequence, read N- to C-terminus: Purine nucleoside phosphorylase DeoD-type (238 aa).

Histidine 4 lines the a purine D-ribonucleoside pocket. Phosphate is bound by residues glycine 20, arginine 24, arginine 43, and 87 to 90 (RVGT). A purine D-ribonucleoside-binding positions include 179–181 (EME) and 203–204 (SN).

The protein belongs to the PNP/UDP phosphorylase family. In terms of assembly, homohexamer; trimer of homodimers.

It carries out the reaction a purine D-ribonucleoside + phosphate = a purine nucleobase + alpha-D-ribose 1-phosphate. The enzyme catalyses a purine 2'-deoxy-D-ribonucleoside + phosphate = a purine nucleobase + 2-deoxy-alpha-D-ribose 1-phosphate. Functionally, catalyzes the reversible phosphorolytic breakdown of the N-glycosidic bond in the beta-(deoxy)ribonucleoside molecules, with the formation of the corresponding free purine bases and pentose-1-phosphate. This is Purine nucleoside phosphorylase DeoD-type from Lacticaseibacillus casei (strain BL23) (Lactobacillus casei).